The primary structure comprises 131 residues: MHIGIDIVEVPRIAKALNRGDKGFLNAVYTAGEAAHIEQAHAGDVRAAGIWAAKEAVVKAFGVGFSEGVTFRDVEVRYTATGQPQAVLSGKLASLAVDRSLQVLSISISHTENYAAATALVGPVSAEVRPV.

Mg(2+) contacts are provided by aspartate 6 and glutamate 55.

Belongs to the P-Pant transferase superfamily. AcpS family. It depends on Mg(2+) as a cofactor.

Its subcellular location is the cytoplasm. It catalyses the reaction apo-[ACP] + CoA = holo-[ACP] + adenosine 3',5'-bisphosphate + H(+). Functionally, transfers the 4'-phosphopantetheine moiety from coenzyme A to a Ser of acyl-carrier-protein. This is Holo-[acyl-carrier-protein] synthase from Verminephrobacter eiseniae (strain EF01-2).